Here is a 326-residue protein sequence, read N- to C-terminus: Lipid droplet-associated hydrolase (326 aa).

Serine 140 functions as the Nucleophile in the catalytic mechanism. Residues aspartate 272 and histidine 301 each act as charge relay system in the active site.

The protein belongs to the AB hydrolase superfamily. LDAH family. Expressed in liver, adrenal gland, prostate, spleen, kidney, brown and white adipose tissue, testis and to a lesser extent in brain (at protein level). Expressed in peritoneal macrophages and bone marrow-derived macrophages (at protein level). Highly expressed in macrophage and foam cell-rich areas in atherosclerotic lesions (at protein level). mRNA, but no protein, expressed in heart and muscle.

The protein resides in the lipid droplet. Its subcellular location is the endoplasmic reticulum. The enzyme catalyses a cholesterol ester + H2O = cholesterol + a fatty acid + H(+). Probable serine lipid hydrolase associated with lipid droplets. Has low cholesterol esterase activity. Appears to lack triglyceride lipase activity. Involved in cholesterol and triglyceride homeostasis; stimulates cellular triglyceride accumulation and cellular cholesterol release. Acts antagonistically with PNPLA2/ATGL in regulation of cellular lipid stores. May regulate triglyceride accumulation indirectly through stimulation of PNPLA2/ATGL ubiquitination and proteasomal degradation. Promotes microtubule-dependent lipid droplet fusion. Highly expressed in macrophage-rich areas in atherosclerotic lesions, suggesting that it could promote cholesterol ester turnover in macrophages. Its function is as follows. Stimulates cellular triglyceride accumulation and lipid droplet fusion. In terms of biological role, associates with lipid droplets but does not stimulate cellular triglyceride accumulation, lipid droplet fusion or ATGL proteasomal degradation. In Mus musculus (Mouse), this protein is Lipid droplet-associated hydrolase.